The following is a 219-amino-acid chain: MSKNNSKSTQGAPLDYIPGITTINQPVFMDDSVLTMNPTMNVPTTNTLISPIPVTTSKSSQLDSAHPTVVHIGDNHPEPKNESKTQPKIESKKEPTLKQEEQTIQAEEEAQKIAKEETRESFLRYGGEIIIDIMLGILLGIAVNMLTDYIASIFGLKGTAKFPIQLVLIVIVLYMLRINPDISFPLRSRTDTYGVIFIPIFITAQRNFAIFFSELYNIF.

The segment at 70–102 (VHIGDNHPEPKNESKTQPKIESKKEPTLKQEEQ) is disordered. Residues 73-101 (GDNHPEPKNESKTQPKIESKKEPTLKQEE) show a composition bias toward basic and acidic residues. Residues 96-120 (TLKQEEQTIQAEEEAQKIAKEETRE) are a coiled coil. A run of 3 helical transmembrane segments spans residues 126-146 (GGEI…VNML), 153-173 (IFGL…VIVL), and 192-212 (TYGV…AIFF).

Its subcellular location is the membrane. This is an uncharacterized protein from Acanthamoeba polyphaga mimivirus (APMV).